Here is a 610-residue protein sequence, read N- to C-terminus: UvrABC system protein C (610 aa).

In terms of domain architecture, GIY-YIG spans 16–94 (SQPGVYRMYD…IKLYQPRYNV (79 aa)). The region spanning 204-239 (QQVLTQLITRMEEASQQLHFEDAARIRDQIQAVRRV) is the UVR domain.

It belongs to the UvrC family. Interacts with UvrB in an incision complex.

The protein resides in the cytoplasm. In terms of biological role, the UvrABC repair system catalyzes the recognition and processing of DNA lesions. UvrC both incises the 5' and 3' sides of the lesion. The N-terminal half is responsible for the 3' incision and the C-terminal half is responsible for the 5' incision. This is UvrABC system protein C from Yersinia pseudotuberculosis serotype O:1b (strain IP 31758).